A 164-amino-acid polypeptide reads, in one-letter code: MSITFGELVGNFILVTGSVIVLLLLIKKFAWGAIESILQTRSQQISRDIDQAEQSRLSAQQLEAKSQANLDASRLQASKIISDAKEIGQLQGDKLVAEATDEAKRLKEKALTDIEQSKSDAISAVKTEMSDLTVLLAEKIMGANLDKTAQSQLIDSYLDDLGEA.

A helical membrane pass occupies residues 6–26 (GELVGNFILVTGSVIVLLLLI).

The protein belongs to the ATPase B chain family. As to quaternary structure, F-type ATPases have 2 components, F(1) - the catalytic core - and F(0) - the membrane proton channel. F(1) has five subunits: alpha(3), beta(3), gamma(1), delta(1), epsilon(1). F(0) has three main subunits: a(1), b(2) and c(10-14). The alpha and beta chains form an alternating ring which encloses part of the gamma chain. F(1) is attached to F(0) by a central stalk formed by the gamma and epsilon chains, while a peripheral stalk is formed by the delta and b chains.

The protein localises to the cell membrane. F(1)F(0) ATP synthase produces ATP from ADP in the presence of a proton or sodium gradient. F-type ATPases consist of two structural domains, F(1) containing the extramembraneous catalytic core and F(0) containing the membrane proton channel, linked together by a central stalk and a peripheral stalk. During catalysis, ATP synthesis in the catalytic domain of F(1) is coupled via a rotary mechanism of the central stalk subunits to proton translocation. In terms of biological role, component of the F(0) channel, it forms part of the peripheral stalk, linking F(1) to F(0). In Streptococcus pyogenes serotype M1, this protein is ATP synthase subunit b.